Here is a 420-residue protein sequence, read N- to C-terminus: Serine hydroxymethyltransferase (420 aa).

(6S)-5,6,7,8-tetrahydrofolate-binding positions include Leu-121 and Gly-125 to Leu-127. Lys-230 carries the N6-(pyridoxal phosphate)lysine modification. (6S)-5,6,7,8-tetrahydrofolate is bound by residues Glu-246 and Ser-354 to Phe-356.

It belongs to the SHMT family. In terms of assembly, homodimer. The cofactor is pyridoxal 5'-phosphate.

It is found in the cytoplasm. It catalyses the reaction (6R)-5,10-methylene-5,6,7,8-tetrahydrofolate + glycine + H2O = (6S)-5,6,7,8-tetrahydrofolate + L-serine. Its pathway is one-carbon metabolism; tetrahydrofolate interconversion. The protein operates within amino-acid biosynthesis; glycine biosynthesis; glycine from L-serine: step 1/1. Catalyzes the reversible interconversion of serine and glycine with tetrahydrofolate (THF) serving as the one-carbon carrier. This reaction serves as the major source of one-carbon groups required for the biosynthesis of purines, thymidylate, methionine, and other important biomolecules. Also exhibits THF-independent aldolase activity toward beta-hydroxyamino acids, producing glycine and aldehydes, via a retro-aldol mechanism. The polypeptide is Serine hydroxymethyltransferase (Rickettsia prowazekii (strain Madrid E)).